The following is a 299-amino-acid chain: 33 kDa chaperonin (299 aa).

Disulfide bonds link C234/C236 and C268/C271.

This sequence belongs to the HSP33 family. Post-translationally, under oxidizing conditions two disulfide bonds are formed involving the reactive cysteines. Under reducing conditions zinc is bound to the reactive cysteines and the protein is inactive.

It is found in the cytoplasm. Redox regulated molecular chaperone. Protects both thermally unfolding and oxidatively damaged proteins from irreversible aggregation. Plays an important role in the bacterial defense system toward oxidative stress. In Pseudomonas putida (strain ATCC 700007 / DSM 6899 / JCM 31910 / BCRC 17059 / LMG 24140 / F1), this protein is 33 kDa chaperonin.